The chain runs to 414 residues: Na(+)-translocating NADH-quinone reductase subunit B (414 aa).

Helical transmembrane passes span 56 to 76, 82 to 104, 129 to 149, and 164 to 184; these read IMIM…YNVG, ALNH…HYWL, FLPI…LFCM, and ILFA…LGIT. Residue T236 is modified to FMN phosphoryl threonine. Helical transmembrane passes span 275-295, 297-317, 325-345, 358-378, and 381-401; these read VSTL…IASW, IIAG…VIGS, MPWH…FMAT, WAYG…NPAY, and GMML…HIVI.

It belongs to the NqrB/RnfD family. In terms of assembly, composed of six subunits; NqrA, NqrB, NqrC, NqrD, NqrE and NqrF. The cofactor is FMN.

The protein resides in the cell inner membrane. It catalyses the reaction a ubiquinone + n Na(+)(in) + NADH + H(+) = a ubiquinol + n Na(+)(out) + NAD(+). Functionally, NQR complex catalyzes the reduction of ubiquinone-1 to ubiquinol by two successive reactions, coupled with the transport of Na(+) ions from the cytoplasm to the periplasm. NqrA to NqrE are probably involved in the second step, the conversion of ubisemiquinone to ubiquinol. The polypeptide is Na(+)-translocating NADH-quinone reductase subunit B (Vibrio anguillarum (Listonella anguillarum)).